The primary structure comprises 358 residues: 3-isopropylmalate dehydrogenase (358 aa).

79–92 contributes to the NAD(+) binding site; it reads GPKWEHLPPDEQPE. Positions 100, 110, 139, and 227 each coordinate substrate. Residues D227, D251, and D255 each coordinate Mg(2+). 285–297 contacts NAD(+); the sequence is GSAPDIAGKGVAN.

The protein belongs to the isocitrate and isopropylmalate dehydrogenases family. LeuB type 1 subfamily. As to quaternary structure, homodimer. It depends on Mg(2+) as a cofactor. Requires Mn(2+) as cofactor.

It is found in the cytoplasm. The catalysed reaction is (2R,3S)-3-isopropylmalate + NAD(+) = 4-methyl-2-oxopentanoate + CO2 + NADH. It functions in the pathway amino-acid biosynthesis; L-leucine biosynthesis; L-leucine from 3-methyl-2-oxobutanoate: step 3/4. In terms of biological role, catalyzes the oxidation of 3-carboxy-2-hydroxy-4-methylpentanoate (3-isopropylmalate) to 3-carboxy-4-methyl-2-oxopentanoate. The product decarboxylates to 4-methyl-2 oxopentanoate. In Pseudoalteromonas translucida (strain TAC 125), this protein is 3-isopropylmalate dehydrogenase.